Reading from the N-terminus, the 715-residue chain is ATP-dependent zinc metalloprotease YME1L1 (715 aa).

Over 1-237 the chain is Mitochondrial matrix; it reads MFSLSSTVQP…TNDSLRRTRL (237 aa). The disordered stretch occupies residues 34–54; sequence NTPVSQKQHRDTVPEHEAPSS. Basic and acidic residues predominate over residues 41 to 52; sequence QHRDTVPEHEAP. A helical transmembrane segment spans residues 238-258; the sequence is ILFVLLLFGIYGLLKNPFLSV. Residues 259–715 lie on the Mitochondrial intermembrane side of the membrane; it reads RFRTTTGLDS…VLEGKKLEVR (457 aa). Positions 283, 325, 326, 327, 328, and 329 each coordinate ATP. Zn(2+) is bound at residue H541. Residue E542 is part of the active site. Zn(2+) contacts are provided by H545 and D619.

The protein in the N-terminal section; belongs to the AAA ATPase family. It in the C-terminal section; belongs to the peptidase M41 family. As to quaternary structure, homohexamer; may also form heterohexamers. Exists in several complexes of 600-1100 kDa. Interacts with AFG1L. It depends on Zn(2+) as a cofactor. Post-translationally, proteolytically processed by mitochondrial processing peptidase (MPP) to generate the mature form. Degraded in an OMA1-dependent manner in response to oxidative stress. Detected in heart and skeletal muscle (at protein level).

It is found in the mitochondrion inner membrane. The protein localises to the mitochondrion. The catalysed reaction is ATP + H2O = ADP + phosphate + H(+). In terms of biological role, ATP-dependent metalloprotease that catalyzes the degradation of folded and unfolded proteins with a suitable degron sequence in the mitochondrial intermembrane region. Plays an important role in regulating mitochondrial morphology and function by cleaving OPA1 at position S2, giving rise to a form of OPA1 that promotes maintenance of normal mitochondrial structure and mitochondrial protein metabolism. Ensures cell proliferation, maintains normal cristae morphology and complex I respiration activity, promotes antiapoptotic activity and protects mitochondria from the accumulation of oxidatively damaged membrane proteins. Required to control the accumulation of nonassembled respiratory chain subunits (NDUFB6, OX4 and ND1). Involved in the mitochondrial adaptation in response to various signals, such as stress or developmental cues, by mediating degradation of mitochondrial proteins to rewire the mitochondrial proteome. Catalyzes degradation of mitochondrial proteins, such as translocases, lipid transfer proteins and metabolic enzymes in response to nutrient starvation in order to limit mitochondrial biogenesis: mechanistically, YME1L is activated by decreased phosphatidylethanolamine levels caused by LPIN1 activity in response to mTORC1 inhibition. Acts as a regulator of adult neural stem cell self-renewal by promoting mitochondrial proteome rewiring, preserving neural stem and progenitor cells self-renewal. Required for normal, constitutive degradation of PRELID1. Catalyzes the degradation of OMA1 in response to membrane depolarization. Mediates degradation of TIMM17A downstream of the integrated stress response (ISR). Catalyzes degradation of MICU1 when MICU1 is not assembled via an interchain disulfide. In Mus musculus (Mouse), this protein is ATP-dependent zinc metalloprotease YME1L1 (Yme1l1).